We begin with the raw amino-acid sequence, 287 residues long: Undecaprenyl-diphosphatase (287 aa).

7 helical membrane passes run 6–26 (LHLL…FIPV), 45–65 (SGKV…MWIF), 89–109 (NLLL…KSIK), 111–131 (VFYH…IMLW), 204–224 (ATEF…VYDL), 238–258 (AIAV…RAVL), and 266–286 (YRVF…WIYA).

Belongs to the UppP family.

The protein resides in the cell inner membrane. It catalyses the reaction di-trans,octa-cis-undecaprenyl diphosphate + H2O = di-trans,octa-cis-undecaprenyl phosphate + phosphate + H(+). Its function is as follows. Catalyzes the dephosphorylation of undecaprenyl diphosphate (UPP). Confers resistance to bacitracin. In Bordetella pertussis (strain Tohama I / ATCC BAA-589 / NCTC 13251), this protein is Undecaprenyl-diphosphatase.